A 407-amino-acid chain; its full sequence is Putative nickel insertion protein (407 aa).

Belongs to the LarC family.

The protein is Putative nickel insertion protein of Gloeothece citriformis (strain PCC 7424) (Cyanothece sp. (strain PCC 7424)).